The sequence spans 264 residues: S-methyl-5'-thioadenosine phosphorylase (264 aa).

Phosphate contacts are provided by residues serine 14 and 55–56 (RH). Position 180 (methionine 180) interacts with substrate. Residue threonine 181 participates in phosphate binding. 204-206 (DVD) serves as a coordination point for substrate.

Belongs to the PNP/MTAP phosphorylase family. MTAP subfamily. Homodimer.

The catalysed reaction is S-methyl-5'-thioadenosine + phosphate = 5-(methylsulfanyl)-alpha-D-ribose 1-phosphate + adenine. The protein operates within amino-acid biosynthesis; L-methionine biosynthesis via salvage pathway; S-methyl-5-thio-alpha-D-ribose 1-phosphate from S-methyl-5'-thioadenosine (phosphorylase route): step 1/1. Its activity is regulated as follows. Not inhibited by adenosine, potently inhibited by MT-DADMe-immucillin A. Catalyzes the reversible phosphorylation of S-methyl-5'-thioadenosine (MTA) to adenine and 5-methylthioribose-1-phosphate. Involved in the breakdown of MTA, a major by-product of polyamine biosynthesis. Responsible for the first step in the methionine salvage pathway after MTA has been generated from S-adenosylmethionine. Prefers MTA, with 2% activity on adenosine, 0.8% activity on S-adenosyl-L-homocysteine and no activity on other tested nucleosides. The chain is S-methyl-5'-thioadenosine phosphorylase from Mycobacterium tuberculosis (strain ATCC 25618 / H37Rv).